The following is a 280-amino-acid chain: Bis(5'-nucleosyl)-tetraphosphatase, symmetrical (280 aa).

It belongs to the Ap4A hydrolase family.

The enzyme catalyses P(1),P(4)-bis(5'-adenosyl) tetraphosphate + H2O = 2 ADP + 2 H(+). Hydrolyzes diadenosine 5',5'''-P1,P4-tetraphosphate to yield ADP. The protein is Bis(5'-nucleosyl)-tetraphosphatase, symmetrical of Paracidovorax citrulli (strain AAC00-1) (Acidovorax citrulli).